Consider the following 573-residue polypeptide: MPEISRPAYADLFGPTTGDRIRLADTDLLIEIEEDRSGGPGLAGDEAVFGGGKVIRESMGQARATRADGTPDTVITGVVIVDHWGIVKADVGMRDGRITGIGKAGNPDTMDGVHPDLVIGPETEIIAGNGRILTAGAIDAHVHLICPQIADEALGSGITTLVGGGTGPAEGSKATTVTPGPWHLARMLEAMEEYPLNFGLLGKGNTVSHDAMLSQIRGGALGLKLHEDWGSTPAVIDAALTVADRTGVQIAIHTDTLNEAGFVGDTLAAIGGRGIHAYHTEGAGGGHAPDIMSVVSEPHVLPSSTNPTRPFTVNTAEEHLDMLMVCHHLNPAVPEDLAFAESRIRPSTIGAEDILHDLGAISIISSDAQAMGRVGEVIMRTWQTAHVMKRRRGALPGDGRADNHRVRRYVAKYTINPALAQGLAREIGSVETGKLADLVLWEPAFFGVKPHLVIKGGQIAYAQMGDANASIPTPQPILPRPMFGAIGRAPASNSFNFVAPLAIEDGLPERLSLGKRFVAIESTRGVTKADMRENDARPRVRIDPDSFAVHIDGELVEATPAAELPMAQRYFLF.

Residues 136–573 (GAIDAHVHLI…LPMAQRYFLF (438 aa)) enclose the Urease domain. 3 residues coordinate Ni(2+): His-141, His-143, and Lys-224. Lys-224 carries the post-translational modification N6-carboxylysine. His-226 lines the substrate pocket. 2 residues coordinate Ni(2+): His-253 and His-279. Catalysis depends on His-327, which acts as the Proton donor. Asp-367 serves as a coordination point for Ni(2+).

It belongs to the metallo-dependent hydrolases superfamily. Urease alpha subunit family. As to quaternary structure, may form a heterohexamer of 3 UreC (alpha) and 3 UreAB (gamma/beta) subunits. May also form a heterotrimer of UreA (gamma), UreB (beta) and UreC (alpha) subunits. Three heterotrimers associate to form the active enzyme. The cofactor is Ni cation. Carboxylation allows a single lysine to coordinate two nickel ions.

It localises to the cytoplasm. It carries out the reaction urea + 2 H2O + H(+) = hydrogencarbonate + 2 NH4(+). The protein operates within nitrogen metabolism; urea degradation; CO(2) and NH(3) from urea (urease route): step 1/1. This is Urease subunit alpha 2 from Streptomyces avermitilis (strain ATCC 31267 / DSM 46492 / JCM 5070 / NBRC 14893 / NCIMB 12804 / NRRL 8165 / MA-4680).